The chain runs to 503 residues: uncharacterized protein (503 aa).

It belongs to the Mg-chelatase subunits D/I family. ComM subfamily.

This is an uncharacterized protein from Mycobacterium tuberculosis (strain CDC 1551 / Oshkosh).